The primary structure comprises 676 residues: E3 ubiquitin-protein ligase ICP0 (676 aa).

The RING-type zinc-finger motif lies at 13 to 52 (CCICLDAITGAARALPCLHAFCLACIRRWLEGRPTCPLCK). Disordered stretches follow at residues 101 to 135 (DLTA…EAAG), 266 to 486 (HLIP…PAPI), and 555 to 676 (AAIS…AWRQ). Residues 110-135 (PGAGGEAGAAGGSEAGGGAGGAEAAG) show a composition bias toward gly residues. The segment covering 286 to 303 (SDSDSEGSEDDSWSESEE) has biased composition (acidic residues). The span at 304-314 (SSSGLSTSDLT) shows a compositional bias: low complexity. Over residues 315–328 (AIDDTETEPETDAE) the composition is skewed to acidic residues. Residues 351–361 (YVSTRGRQTPA) show a composition bias toward polar residues. 2 stretches are compositionally biased toward low complexity: residues 375–388 (GRAA…SSRS) and 397–411 (LPAA…QARA). Residues 422-439 (GAGLGVAAGETAGWGVGS) show a composition bias toward gly residues. The span at 440-450 (EEGRGERRAKL) shows a compositional bias: basic and acidic residues. Pro residues predominate over residues 474-484 (TPAPAPAPAPA). A compositionally biased stretch (low complexity) spans 555 to 597 (AAISTRAPTPSPAGRAPAADPRRAGAPALAGAARAEAGRNGNP).

Auto-ubiquitinated. Post-translationally, the strongly acidic region might serve as a transcriptional activation domain, possibly regulated through phosphorylation by casein kinase II.

It catalyses the reaction S-ubiquitinyl-[E2 ubiquitin-conjugating enzyme]-L-cysteine + [acceptor protein]-L-lysine = [E2 ubiquitin-conjugating enzyme]-L-cysteine + N(6)-ubiquitinyl-[acceptor protein]-L-lysine.. Evades nuclear antiviral defenses triggered by dsDNA viruses. Acts during the initial stages of lytic infection and the reactivation of latent viral genome. Prevents the antiviral effect of nuclear bodies by degrading host PML and SP100. The chain is E3 ubiquitin-protein ligase ICP0 (BICP0) from Bos taurus (Bovine).